The sequence spans 511 residues: Synaptotagmin-6 (511 aa).

Residues 1-59 lie on the Vesicular side of the membrane; that stretch reads MSGVWGAGGPRCQAALAVLASLCRARPPPLGLDVETCQSFELQPPEQSPSAADSGTSVS. The tract at residues 12–38 is cysteine motif; that stretch reads CQAALAVLASLCRARPPPLGLDVETCQ. Residues 60–80 form a helical membrane-spanning segment; sequence LLAVVVIVCGVALVAVFFFLF. Topologically, residues 81 to 511 are cytoplasmic; the sequence is WKLCWMPWRN…KSFKEGTPRL (431 aa). Residues 93 to 103 show a composition bias toward low complexity; sequence ASSPSSANPAS. Disordered stretches follow at residues 93 to 118 and 157 to 182; these read ASSPSSANPASEILQSPSSRGNMADK and TKLQRQTTEPASSTRHTSFKRHLPRQ. Positions 160–172 are enriched in polar residues; that stretch reads QRQTTEPASSTRH. Serine 217 carries the post-translational modification Phosphoserine. C2 domains lie at 230–351 and 362–495; these read SCGK…SIWK and DLGE…AHWH. Positions 261, 267, 319, 320, 321, 324, 327, 393, 399, 453, and 455 each coordinate Ca(2+). The interval 483–511 is necessary for cell membrane association (isoform 2); the sequence is MLAYPRKPIAHWHCLAEVKKSFKEGTPRL.

The protein belongs to the synaptotagmin family. In terms of assembly, isoform 1: Homodimer; disulfide-linked via the cysteine motif. Isoform 1: Can also form heterodimers with SYT3, SYT7, SYT9 and SYT10. Isoform 1: Interacts with STX1A, STX1B and STX2; the interaction is Ca(2+)-dependent. Isoform 2: Is not able to form homodimer and heterodimers. Ca(2+) is required as a cofactor.

The protein localises to the cytoplasmic vesicle. It localises to the secretory vesicle. Its subcellular location is the synaptic vesicle membrane. The protein resides in the membrane. It is found in the cytoplasm. The protein localises to the cytosol. It localises to the cell membrane. Its function is as follows. May be involved in Ca(2+)-dependent exocytosis of secretory vesicles through Ca(2+) and phospholipid binding to the C2 domain or may serve as Ca(2+) sensors in the process of vesicular trafficking and exocytosis. May mediate Ca(2+)-regulation of exocytosis in acrosomal reaction in sperm. This chain is Synaptotagmin-6 (Syt6), found in Rattus norvegicus (Rat).